A 309-amino-acid chain; its full sequence is N(5)-(carboxyethyl)ornithine synthase (309 aa).

Pyruvate is bound by residues arginine 15, lysine 71, and histidine 92. NADP(+) is bound at residue 171–176 (GSGNVA).

The protein belongs to the AlaDH/PNT family. CEOS subfamily. In terms of assembly, homotetramer.

The enzyme catalyses N(5)-[1(S)-1-carboxyethyl]-L-ornithine + NADP(+) + H2O = L-ornithine + pyruvate + NADPH + H(+). In terms of biological role, catalyzes the NADPH-dependent reductive condensation between pyruvic acid and the side chain amino group of L-ornithine to form N(5)-(L-1-carboxyethyl)-L-ornithine. To a lesser extent, can also use L-lysine as substrate (yielding N(6)-(L-1-carboxyethyl)-L-lysine). The protein is N(5)-(carboxyethyl)ornithine synthase (ceo) of Lactococcus lactis subsp. lactis (strain IL1403) (Streptococcus lactis).